The chain runs to 606 residues: Aspartate--tRNA(Asp/Asn) ligase (606 aa).

Glu-187 serves as a coordination point for L-aspartate. The segment at 211-214 is aspartate; sequence QQFK. L-aspartate contacts are provided by Arg-233 and His-461. 233-235 is a binding site for ATP; the sequence is RDE. Glu-495 serves as a coordination point for ATP. Residue Arg-502 coordinates L-aspartate. 547 to 550 is an ATP binding site; it reads GLDR.

It belongs to the class-II aminoacyl-tRNA synthetase family. Type 1 subfamily. Homodimer.

It localises to the cytoplasm. It carries out the reaction tRNA(Asx) + L-aspartate + ATP = L-aspartyl-tRNA(Asx) + AMP + diphosphate. In terms of biological role, aspartyl-tRNA synthetase with relaxed tRNA specificity since it is able to aspartylate not only its cognate tRNA(Asp) but also tRNA(Asn). Reaction proceeds in two steps: L-aspartate is first activated by ATP to form Asp-AMP and then transferred to the acceptor end of tRNA(Asp/Asn). This chain is Aspartate--tRNA(Asp/Asn) ligase, found in Chlorobium phaeobacteroides (strain DSM 266 / SMG 266 / 2430).